Here is a 345-residue protein sequence, read N- to C-terminus: MSTFRSIEWKKDKLVLLDQRYLPEKTLYLELKTVDEVARAIKEMTVRGAPAIGVAAAYGMVLCVQKLSKNDDLIRELQKADDLLRASRPTAVNLFWALDRMKKIWQGFNGSLEDLKMILEKEATDIEREDVEINKQIAKNGVELVPFGAKIIHHCNTGSLATVDYGTALGVIRYAHEIGKKIHVFLDETRPRLQGARLSAWEMKELGIPHTIIVDGASGLVMKKFKIDLALVGADRIAANGDTANKIGTYNLAIVAKYHNVPLYVVAPTSTIDLKTPAGQDIPIEERSADEIRCVGNSQVAPQESPVFNPAFDVTPAELISGIITEKGIVYPPFKENLRKLFESA.

Substrate contacts are provided by residues 47-49 (RGA), Arg88, and Gln194. Residue Asp235 is the Proton donor of the active site. Residue 245 to 246 (NK) coordinates substrate.

This sequence belongs to the eIF-2B alpha/beta/delta subunits family. MtnA subfamily.

The enzyme catalyses 5-(methylsulfanyl)-alpha-D-ribose 1-phosphate = 5-(methylsulfanyl)-D-ribulose 1-phosphate. It participates in amino-acid biosynthesis; L-methionine biosynthesis via salvage pathway; L-methionine from S-methyl-5-thio-alpha-D-ribose 1-phosphate: step 1/6. In terms of biological role, catalyzes the interconversion of methylthioribose-1-phosphate (MTR-1-P) into methylthioribulose-1-phosphate (MTRu-1-P). This Pseudothermotoga lettingae (strain ATCC BAA-301 / DSM 14385 / NBRC 107922 / TMO) (Thermotoga lettingae) protein is Methylthioribose-1-phosphate isomerase 2.